The chain runs to 208 residues: MGCATTSVKIASIVLNAVLGFLAAGAIGWIAYNADTETEEFVIAAYIACSLILVFALLGIFAAIRESVVLTATSAVFLLILAILQIVSTCLFLHEFDVKSGRDMVEVAWQANNMDSLQQKHECCGQSSAQDYIHLSLLIPPSCYADLQQTPDHLYLDGCIEKVQSFYESDKLRFIIVSWVLVAFELICFALAVFLAISFKNKQRRMEF.

Helical transmembrane passes span 10–30 (IASI…IGWI), 41–61 (FVIA…LGIF), 67–87 (SVVL…LQIV), and 174–194 (FIIV…LAVF).

This sequence belongs to the tetraspanin (TM4SF) family. Transiently expressed on motor axons, growth cones and terminal arbors.

It is found in the membrane. Its subcellular location is the synapse. Its function is as follows. Facilitates synapse formation. In Drosophila melanogaster (Fruit fly), this protein is Protein late bloomer (lbm).